Consider the following 451-residue polypeptide: 3-carboxy-cis,cis-muconate cycloisomerase (451 aa).

It belongs to the class-II fumarase/aspartase family. Homotetramer.

It catalyses the reaction 2-(carboxymethyl)-5-oxo-2,5-dihydro-2-furoate = 3-carboxy-cis,cis-muconate + H(+). It functions in the pathway aromatic compound metabolism; beta-ketoadipate pathway; 5-oxo-4,5-dihydro-2-furylacetate from 3-carboxy-cis,cis-muconate: step 1/2. Functionally, catalyzes an anti cycloisomerization. The chain is 3-carboxy-cis,cis-muconate cycloisomerase (pcaB) from Acinetobacter baylyi (strain ATCC 33305 / BD413 / ADP1).